The chain runs to 335 residues: tRNA methyltransferase 10 homolog A (335 aa).

2 disordered regions span residues 1–91 (MSSE…DRKR) and 279–335 (VPAH…PDPQ). 2 positions are modified to phosphoserine: Ser-22 and Ser-24. The segment covering 52–62 (RLWEEQREQRK) has biased composition (basic and acidic residues). A coiled-coil region spans residues 52–84 (RLWEEQREQRKEKRKEKRKRKKLERRCQLESNS). Basic residues predominate over residues 63–75 (EKRKEKRKRKKLE). Residues 88-279 (DRKRIRRHVA…TILPPRKGAV (192 aa)) form the SAM-dependent MTase TRM10-type domain. The segment covering 304-319 (EGEHGRDDPGSPHKEQ) has biased composition (basic and acidic residues). Positions 320–335 (QGQQSSSVSAVSPDPQ) are enriched in low complexity. The residue at position 331 (Ser-331) is a Phosphoserine.

This sequence belongs to the class IV-like SAM-binding methyltransferase superfamily. TRM10 family. Interacts with tRNA. In terms of tissue distribution, ubiquitously expressed. Is more abundant in brain and pancreatic islets compared to other tissues (at protein level).

Its subcellular location is the nucleus. It localises to the nucleolus. The enzyme catalyses guanosine(9) in tRNA + S-adenosyl-L-methionine = N(1)-methylguanosine(9) in tRNA + S-adenosyl-L-homocysteine + H(+). Functionally, S-adenosyl-L-methionine-dependent guanine N(1)-methyltransferase that catalyzes the formation of N(1)-methylguanine at position 9 (m1G9) in tRNAs. Probably not able to catalyze formation of N(1)-methyladenine at position 9 (m1A9) in tRNAs. This chain is tRNA methyltransferase 10 homolog A (Trmt10a), found in Rattus norvegicus (Rat).